A 253-amino-acid chain; its full sequence is DNA repair protein RecO (253 aa).

This sequence belongs to the RecO family.

Its function is as follows. Involved in DNA repair and RecF pathway recombination. The protein is DNA repair protein RecO of Dehalococcoides mccartyi (strain ATCC BAA-2266 / KCTC 15142 / 195) (Dehalococcoides ethenogenes (strain 195)).